A 367-amino-acid chain; its full sequence is MAYRVLGRAGPPQPRRARRLLFAFTLSLSCTYLCYSFLCCCDGLGQSRLLGAPRCLRGPSASGQKLLAKSRPCDPPGPTPSEPSAPSAPAAAAPAPRLSGSNHSGSPKPGTKRLPQALIVGVKKGGTRAVLEFIRVHPDVRALGTEPHFFDRNYGRGLDWYRSLMPRTLETQITLEKTPSYFVTQEAPRRIFNMSRDTKLIVVVRNPVTRAISDYTQTLSKKPDIPTFEGLSFRNRSLGLVDVSWNAIRIGMYALHLESWLRYFPLAQIHFVSGERLITDPAGEMGRIQDFLGIKRFITDKHFYFNKTKGFPCLKKPESTLLPRCLGKSKGRTHVQIDPEVIDQLREFYRPYNIKFYETVGQDFRWE.

Residues 1–19 (MAYRVLGRAGPPQPRRARR) lie on the Cytoplasmic side of the membrane. The chain crosses the membrane as a helical; Signal-anchor for type II membrane protein span at residues 20-39 (LLFAFTLSLSCTYLCYSFLC). Topologically, residues 40–367 (CCDGLGQSRL…ETVGQDFRWE (328 aa)) are lumenal. The tract at residues 66 to 115 (LLAKSRPCDPPGPTPSEPSAPSAPAAAAPAPRLSGSNHSGSPKPGTKRLP) is disordered. Residues 73–83 (CDPPGPTPSEP) are compositionally biased toward pro residues. Residues 84–96 (SAPSAPAAAAPAP) show a composition bias toward low complexity. A glycan (N-linked (GlcNAc...) asparagine) is linked at Asn-102. 124-128 (KGGTR) is a 3'-phosphoadenylyl sulfate binding site. Residues 146 to 152 (EPHFFDR) and 177 to 180 (KTPS) each bind substrate. An N-linked (GlcNAc...) asparagine glycan is attached at Asn-193. 3'-phosphoadenylyl sulfate-binding residues include Arg-205 and Ser-213. An N-linked (GlcNAc...) asparagine glycan is attached at Asn-235. 245 to 246 (WN) is a binding site for substrate. Asn-306 carries an N-linked (GlcNAc...) asparagine glycan. Cys-313 and Cys-325 form a disulfide bridge. 3'-phosphoadenylyl sulfate is bound at residue 330–334 (KGRTH).

The protein belongs to the sulfotransferase 1 family.

It is found in the golgi apparatus membrane. It catalyses the reaction alpha-D-glucosaminyl-[heparan sulfate](n) + 3'-phosphoadenylyl sulfate = 3-sulfo-alpha-D-glucosaminyl-[heparan sulfate](n) + adenosine 3',5'-bisphosphate + H(+). Functionally, sulfotransferase that utilizes 3'-phospho-5'-adenylyl sulfate (PAPS) to catalyze the transfer of a sulfo group to an N-unsubstituted glucosamine linked to a 2-O-sulfo iduronic acid unit on heparan sulfate. Catalyzes the O-sulfation of glucosamine in GlcA2S-GlcNS. Unlike HS3ST1/3-OST-1, does not convert non-anticoagulant heparan sulfate to anticoagulant heparan sulfate. The chain is Heparan sulfate glucosamine 3-O-sulfotransferase 2 (Hs3st2) from Mus musculus (Mouse).